The sequence spans 415 residues: Putative F-box/FBD/LRR-repeat protein At3g49040 (415 aa).

One can recognise an F-box domain in the interval 10-58 (EDRISELHEALLVHIMSSLPTKTVVATSVLSKRWRHVWKTVQNLKFVSK). LRR repeat units follow at residues 60-86 (HQTFSEDVYRFFMLHKAPFLESLDLEF), 87-114 (SNQLDASDLGILVGIAFARHVRNLVLDL), 143-170 (TLTLKHSILLYFPYRVCLKSLRKLHLYK), 171-196 (VHFYGKDSVYNLLCGCPSLRDLIVHR), and 213-241 (RLTIEDSGFGYGCCYVINAPSLKYLNIRR). Residues 272–377 (ILESLTSAKR…TSLKKATFST (106 aa)) enclose the FBD domain.

This chain is Putative F-box/FBD/LRR-repeat protein At3g49040, found in Arabidopsis thaliana (Mouse-ear cress).